Reading from the N-terminus, the 389-residue chain is Phospho-N-acetylmuramoyl-pentapeptide-transferase (389 aa).

10 consecutive transmembrane segments (helical) span residues 25–45, 73–93, 97–117, 135–155, 190–210, 222–242, 259–279, 287–307, 311–331, and 366–386; these read RAVM…PAVI, TMGG…WADL, FIWI…VDDY, FWQS…VSEA, ISYP…IVGA, GLVI…AYVM, AGEL…FLWF, FMGD…AVIV, IVLF…MLQV, and QVVV…LSTL.

It belongs to the glycosyltransferase 4 family. MraY subfamily. Requires Mg(2+) as cofactor.

Its subcellular location is the cell inner membrane. The catalysed reaction is UDP-N-acetyl-alpha-D-muramoyl-L-alanyl-gamma-D-glutamyl-meso-2,6-diaminopimeloyl-D-alanyl-D-alanine + di-trans,octa-cis-undecaprenyl phosphate = di-trans,octa-cis-undecaprenyl diphospho-N-acetyl-alpha-D-muramoyl-L-alanyl-D-glutamyl-meso-2,6-diaminopimeloyl-D-alanyl-D-alanine + UMP. Its pathway is cell wall biogenesis; peptidoglycan biosynthesis. Its function is as follows. Catalyzes the initial step of the lipid cycle reactions in the biosynthesis of the cell wall peptidoglycan: transfers peptidoglycan precursor phospho-MurNAc-pentapeptide from UDP-MurNAc-pentapeptide onto the lipid carrier undecaprenyl phosphate, yielding undecaprenyl-pyrophosphoryl-MurNAc-pentapeptide, known as lipid I. The sequence is that of Phospho-N-acetylmuramoyl-pentapeptide-transferase from Paraburkholderia phytofirmans (strain DSM 17436 / LMG 22146 / PsJN) (Burkholderia phytofirmans).